A 486-amino-acid chain; its full sequence is Probable glycine dehydrogenase (decarboxylating) subunit 2 (486 aa).

K269 is modified (N6-(pyridoxal phosphate)lysine).

Belongs to the GcvP family. C-terminal subunit subfamily. The glycine cleavage system is composed of four proteins: P, T, L and H. In this organism, the P 'protein' is a heterodimer of two subunits. It depends on pyridoxal 5'-phosphate as a cofactor.

The catalysed reaction is N(6)-[(R)-lipoyl]-L-lysyl-[glycine-cleavage complex H protein] + glycine + H(+) = N(6)-[(R)-S(8)-aminomethyldihydrolipoyl]-L-lysyl-[glycine-cleavage complex H protein] + CO2. In terms of biological role, the glycine cleavage system catalyzes the degradation of glycine. The P protein binds the alpha-amino group of glycine through its pyridoxal phosphate cofactor; CO(2) is released and the remaining methylamine moiety is then transferred to the lipoamide cofactor of the H protein. The sequence is that of Probable glycine dehydrogenase (decarboxylating) subunit 2 from Chlorobaculum tepidum (strain ATCC 49652 / DSM 12025 / NBRC 103806 / TLS) (Chlorobium tepidum).